We begin with the raw amino-acid sequence, 144 residues long: Large ribosomal subunit protein eL27 (144 aa).

This sequence belongs to the eukaryotic ribosomal protein eL27 family.

The protein resides in the cytoplasm. This chain is Large ribosomal subunit protein eL27 (RPL27), found in Tetrahymena thermophila.